We begin with the raw amino-acid sequence, 339 residues long: Deubiquitinase and deneddylase Dub2 (339 aa).

Residues 36–56 (IIIALFLIVISCGLILCAYTF) traverse the membrane as a helical segment. Active-site residues include H203, D220, and C282.

This sequence belongs to the peptidase C48 family.

It is found in the secreted. It localises to the host cell. The protein resides in the membrane. Effector proteins function to alter host cell physiology and promote bacterial survival in host tissues. This protease possesses deubiquitinating and deneddylating activities. The protein is Deubiquitinase and deneddylase Dub2 (cdu2) of Chlamydia trachomatis serovar B (strain Jali20/OT).